The following is a 523-amino-acid chain: Tyrosine ammonia-lyase (523 aa).

Tyrosine 60 (proton donor/acceptor) is an active-site residue. Histidine 89 lines the substrate pocket. The 5-imidazolinone (Ala-Gly) cross-link spans 149–151; it reads ASG. A 2,3-didehydroalanine (Ser) modification is found at serine 150. Substrate-binding positions include arginine 303 and 432–436; that span reads NAANQ.

Belongs to the PAL/histidase family. In terms of assembly, homotetramer. Contains an active site 4-methylidene-imidazol-5-one (MIO), which is formed autocatalytically by cyclization and dehydration of residues Ala-Ser-Gly.

The catalysed reaction is L-tyrosine = (E)-4-coumarate + NH4(+). In terms of biological role, catalyzes the non-oxidative deamination of L-tyrosine. Has very low phenylalanine ammonia-lyase activity (in vitro). This is Tyrosine ammonia-lyase (hutH) from Cereibacter sphaeroides (strain ATCC 17023 / DSM 158 / JCM 6121 / CCUG 31486 / LMG 2827 / NBRC 12203 / NCIMB 8253 / ATH 2.4.1.) (Rhodobacter sphaeroides).